The sequence spans 834 residues: MAVVIRLLGLPFIAGPVDIRHFFKGLTIPDGGVHIIGGKVGEAFIIFATDEDARRAISRSGGFIKDSSVELFLSSKVEMQKTIEMKRTARVGRGRPGSGASGVGNVYHFSDALKEEESYSGYGSSVNRDAGFHTNGTGLDLRPRKTRPLKAENPYLFLRGLPYLVNEDDVRVFFSGLCVDGVILLKHHDGRNNGDAIVKFASCVDASGGLKCHRSFMGSRFIEVMQGSEQQWIEFGGTATEGGDTPRMRSEEHSPSRRINGRHFRKRSHSKSPRARSRSPLGFYVHLKNLSLNTNKRDLRNLFRDTDLTNDQIKFVYKDERRTRYAFVMFKNQKDYNTALGLHKTVLQYRPVLIDPVSRKEMVRIIECYEKKRPESLEKERPGRVSQKYSQEGFSGSGQKLCIYIRNLPFDVTKGEVQKFFADFSLVEDDIYLLCDDKGVGLGEALVRFKSEEQAMKAERLNRQRFLGIEVLLRLISEEQMQEFGIKSSWLSNERTQACSRSHDGDDCSCLFDLKDPSSCSFGQSESLRYHPKDLRKMGHFKHPQGYFRQSDRCSPEDFRHSPEDYRHPWEEHTSHSREEDWRLPLEDWPQEDDFRQCHEKDHRQLRSPWEEDFRRPSQEHFRRSYQEHIRRPPQEHFRRSREEDFRHVADEDFRQASDEDFRISQEDLRYPTDEDFRRVSVEDLREVPEKDLRLPKNFRSSGEEFWTPPDFRGQHPFVNFDHLQGGKFDFEKYKLENFHDGKFVPDLKFNCGSGGIIRVMISNLPFKANANEILDFFHGYKVIPDSVSIQYNEEGLPLGEAIVSMTNYNEALSAVKDLSGRPVGPRKVKLSLL.

Positions proline 154–glutamate 229 constitute an RRM 1 domain. Residues glycine 237–serine 277 are disordered. Positions aspartate 244–proline 255 are enriched in basic and acidic residues. A compositionally biased stretch (basic residues) spans isoleucine 259–serine 277. 2 consecutive RRM domains span residues phenylalanine 283–arginine 359 and leucine 401–glutamate 478. Disordered stretches follow at residues glycine 546–glutamate 572 and histidine 621–glutamate 643. Over residues glutamine 550–glutamate 572 the composition is skewed to basic and acidic residues. Position 701 is a phosphoserine (serine 701). An RRM 4 domain is found at isoleucine 758–leucine 834.

The sequence is that of RNA-binding protein 12B-B (Rbm12b2) from Mus musculus (Mouse).